The primary structure comprises 212 residues: Bilin biosynthesis protein PecF (212 aa).

Belongs to the CpcE/RpcE/PecE family.

Functionally, an enzyme involved in the biosynthesis of bilin. This chain is Bilin biosynthesis protein PecF (pecF), found in Mastigocladus laminosus (Fischerella sp.).